We begin with the raw amino-acid sequence, 276 residues long: Large ribosomal subunit protein uL2 (276 aa).

The disordered stretch occupies residues 224–276 (AMNPIDHPHGGGEGKTSGGRNPVTPWGVSTKGKKTRKKNKSSNKYIKRVSDKG). Over residues 254-270 (KGKKTRKKNKSSNKYIK) the composition is skewed to basic residues.

It belongs to the universal ribosomal protein uL2 family. Part of the 50S ribosomal subunit. Forms a bridge to the 30S subunit in the 70S ribosome.

In terms of biological role, one of the primary rRNA binding proteins. Required for association of the 30S and 50S subunits to form the 70S ribosome, for tRNA binding and peptide bond formation. It has been suggested to have peptidyltransferase activity; this is somewhat controversial. Makes several contacts with the 16S rRNA in the 70S ribosome. This Ehrlichia ruminantium (strain Gardel) protein is Large ribosomal subunit protein uL2.